The chain runs to 247 residues: UPF0309 protein Teth39_1980 (247 aa).

In terms of domain architecture, SIS spans 31–213 (IANSLLKEED…EAEIVFIMIK (183 aa)).

Belongs to the UPF0309 family.

This chain is UPF0309 protein Teth39_1980, found in Thermoanaerobacter pseudethanolicus (strain ATCC 33223 / 39E) (Clostridium thermohydrosulfuricum).